Consider the following 516-residue polypeptide: L-amino acid oxidase Lm29 (516 aa).

The first 18 residues, 1–18 (MNVFFMFSLLFLAALGSC), serve as a signal peptide directing secretion. A disulfide bridge connects residues cysteine 28 and cysteine 191. Residues 61–62 (MS), 81–82 (EA), arginine 89, and 105–108 (GPMR) contribute to the FAD site. Arginine 108 provides a ligand contact to substrate. Asparagine 190 carries an N-linked (GlcNAc...) asparagine glycan. Residue histidine 241 coordinates substrate. Valine 279 contacts FAD. Cysteine 349 and cysteine 430 form a disulfide bridge. Asparagine 379 carries N-linked (GlcNAc...) asparagine glycosylation. Tyrosine 390 is a binding site for substrate. FAD is bound by residues glutamate 475 and 482-487 (GWIDST). Substrate is bound at residue 482-483 (GW).

The protein belongs to the flavin monoamine oxidase family. FIG1 subfamily. In terms of assembly, homodimer; non-covalently linked. FAD serves as cofactor. As to expression, expressed by the venom gland.

It is found in the secreted. It carries out the reaction an L-alpha-amino acid + O2 + H2O = a 2-oxocarboxylate + H2O2 + NH4(+). The enzyme catalyses L-leucine + O2 + H2O = 4-methyl-2-oxopentanoate + H2O2 + NH4(+). The catalysed reaction is L-phenylalanine + O2 + H2O = 3-phenylpyruvate + H2O2 + NH4(+). It catalyses the reaction L-tryptophan + O2 + H2O = indole-3-pyruvate + H2O2 + NH4(+). It carries out the reaction L-methionine + O2 + H2O = 4-methylsulfanyl-2-oxobutanoate + H2O2 + NH4(+). The enzyme catalyses L-isoleucine + O2 + H2O = (S)-3-methyl-2-oxopentanoate + H2O2 + NH4(+). The catalysed reaction is L-tyrosine + O2 + H2O = 3-(4-hydroxyphenyl)pyruvate + H2O2 + NH4(+). Functionally, catalyzes an oxidative deamination of predominantly hydrophobic and aromatic L-amino acids, thus producing hydrogen peroxide that may contribute to the diverse toxic effects of this enzyme. Is highly active on L-Met=L-Leu&gt;&gt;L-Phe&gt;L-Trp&gt;L-Tyr&gt;L-Ile, and weakly or not active on L-His, L-Arg, L-Val, L-Gln, L-Thr, L-Lys, and L-Ser. Exhibits a low myotoxicity (a mild myonecrosis is observed after injection in mice quadriceps muscle). In vitro, is cytotoxic to a lot of human cell lines, including AGS (IC(50)=22.7 ug/ml), MCF-7 (IC(50)=1.4 ug/ml), HL-60, HeLa and Jurkat cells, as well as to the parasite Leishmania brasiliensis (IC(50)=2.22 ug/ml). This cytotoxicity is dependent on the production of hydrogen peroxyde, since it is inhibited by catalase, a hydrogen peroxyde scavenger. The polypeptide is L-amino acid oxidase Lm29 (Lachesis muta (South American bushmaster)).